Consider the following 809-residue polypeptide: 3',5'-cyclic-AMP phosphodiesterase 4D (809 aa).

Residues methionine 1–arginine 107 form a disordered region. Phosphoserine is present on residues histidine 54, proline 59, and proline 63. The segment covering proline 58–glycine 89 has biased composition (pro residues). Residues alanine 90–glycine 102 show a composition bias toward low complexity. 5 positions are modified to phosphoserine: serine 142, serine 299, serine 301, serine 348, and serine 375. The tract at residues glutamate 343–isoleucine 364 is disordered. Residues valine 386–serine 715 form the PDEase domain. A Glycyl lysine isopeptide (Lys-Gly) (interchain with G-Cter in SUMO) cross-link involves residue lysine 387. Histidine 462 serves as the catalytic Proton donor. Histidine 462 is a binding site for 3',5'-cyclic AMP. Histidine 462 contributes to the AMP binding site. Zn(2+) is bound by residues histidine 466, histidine 502, aspartate 503, and aspartate 620. Aspartate 503, aspartate 620, asparagine 623, glutamine 671, and phenylalanine 674 together coordinate AMP. A Mg(2+)-binding site is contributed by aspartate 503. Mn(2+) is bound at residue aspartate 503. 2 residues coordinate 3',5'-cyclic AMP: glutamine 671 and phenylalanine 674. Disordered stretches follow at residues serine 710 to glycine 729 and threonine 739 to threonine 809. Residues cysteine 762–serine 773 are compositionally biased toward polar residues. Positions proline 779–glutamine 796 are enriched in acidic residues.

Belongs to the cyclic nucleotide phosphodiesterase family. PDE4 subfamily. In terms of assembly, homodimer for the long isoforms. Isoforms with truncated N-termini are monomeric. Isoform 3 is part of a ternary complex containing PRKAR2A, PRKAR2B and AKAP9. Interacts with PDE4DIP. Identified in a complex composed of RYR1, PDE4D, PKA, FKBP1A and protein phosphatase 1 (PP1). Isoform 5, isoform N3 and isoform 12 bind RACK1 via their unique N-terminus. Binds ARRB2. Interacts (via N-terminal region) with SHANK2 (via proline-rich region); the interaction is increased in a PKA-dependent manner. It depends on Zn(2+) as a cofactor. Requires Mg(2+) as cofactor. The cofactor is Mn(2+). Post-translationally, long isoforms that share a conserved PKA phosphorylation site in the N-terminus are activated by PKA through phosphorylation. Isoform 3 and isoform 7 are activated by phosphorylation (in vitro), but not isoform 6. Isoform N3 and isoform 12 are phosphorylated on Ser-49, Ser-51, Ser-55 and Ser-59. Sumoylation of long isoforms by PIAS4 augments their activation by PKA phosphorylation and represses their inhibition by ERK phosphorylation. As to expression, expressed in colonic epithelial cells (at protein level). Widespread; most abundant in skeletal muscle. In terms of tissue distribution, detected in brain. Detected in brain, placenta, lung and kidney. As to expression, detected in heart and skeletal muscle.

Its subcellular location is the apical cell membrane. The protein localises to the cytoplasm. It is found in the membrane. It localises to the cytoskeleton. The protein resides in the microtubule organizing center. Its subcellular location is the centrosome. The enzyme catalyses 3',5'-cyclic AMP + H2O = AMP + H(+). It participates in purine metabolism; 3',5'-cyclic AMP degradation; AMP from 3',5'-cyclic AMP: step 1/1. With respect to regulation, inhibited by rolipram. Activated by phosphatidic acid. Hydrolyzes the second messenger cAMP, which is a key regulator of many important physiological processes. In Homo sapiens (Human), this protein is 3',5'-cyclic-AMP phosphodiesterase 4D.